Reading from the N-terminus, the 56-residue chain is Cytochrome b-c1 complex subunit 10 (56 aa).

Residues 1 to 12 lie on the Mitochondrial matrix side of the membrane; the sequence is MLTRFLGPRYRQ. Residues 13–35 traverse the membrane as a helical segment; the sequence is LARNWVPTASLWGAVGAVGLVWA. The Mitochondrial intermembrane portion of the chain corresponds to 36–56; it reads TDWRLILDWVPYINGKFKKDD.

The protein belongs to the UQCR11/QCR10 family. As to quaternary structure, component of the ubiquinol-cytochrome c oxidoreductase (cytochrome b-c1 complex, complex III, CIII), a multisubunit enzyme composed of 11 subunits. The complex is composed of 3 respiratory subunits cytochrome b, cytochrome c1 and Rieske protein UQCRFS1, 2 core protein subunits UQCRC1/QCR1 and UQCRC2/QCR2, and 6 low-molecular weight protein subunits UQCRH/QCR6, UQCRB/QCR7, UQCRQ/QCR8, UQCR10/QCR9, UQCR11/QCR10 and subunit 9, the cleavage product of Rieske protein UQCRFS1. The complex exists as an obligatory dimer and forms supercomplexes (SCs) in the inner mitochondrial membrane with NADH-ubiquinone oxidoreductase (complex I, CI) and cytochrome c oxidase (complex IV, CIV), resulting in different assemblies (supercomplex SCI(1)III(2)IV(1) and megacomplex MCI(2)III(2)IV(2)).

It is found in the mitochondrion inner membrane. Its function is as follows. Component of the ubiquinol-cytochrome c oxidoreductase, a multisubunit transmembrane complex that is part of the mitochondrial electron transport chain which drives oxidative phosphorylation. The respiratory chain contains 3 multisubunit complexes succinate dehydrogenase (complex II, CII), ubiquinol-cytochrome c oxidoreductase (cytochrome b-c1 complex, complex III, CIII) and cytochrome c oxidase (complex IV, CIV), that cooperate to transfer electrons derived from NADH and succinate to molecular oxygen, creating an electrochemical gradient over the inner membrane that drives transmembrane transport and the ATP synthase. The cytochrome b-c1 complex catalyzes electron transfer from ubiquinol to cytochrome c, linking this redox reaction to translocation of protons across the mitochondrial inner membrane, with protons being carried across the membrane as hydrogens on the quinol. In the process called Q cycle, 2 protons are consumed from the matrix, 4 protons are released into the intermembrane space and 2 electrons are passed to cytochrome c. QCR10 has a role in CIII assembly and RIP1 stability. This is Cytochrome b-c1 complex subunit 10 (UQCR11) from Bos taurus (Bovine).